Consider the following 364-residue polypeptide: GDSL esterase/lipase At1g29660 (364 aa).

A signal peptide spans 1-26; that stretch reads MESYLRKWCLVSVWVLLLGLGFKVKA. Serine 39 functions as the Nucleophile in the catalytic mechanism. Residues aspartate 328 and histidine 331 each act as charge relay system in the active site.

Belongs to the 'GDSL' lipolytic enzyme family. In terms of tissue distribution, found in phloem exudates.

The protein localises to the secreted. It localises to the extracellular space. Its subcellular location is the apoplast. In terms of biological role, involved in EDS1-dependent systemic acquired resistance, maybe in phloem-mediated long-distance signaling. The polypeptide is GDSL esterase/lipase At1g29660 (Arabidopsis thaliana (Mouse-ear cress)).